Consider the following 209-residue polypeptide: 3-demethoxyubiquinol 3-hydroxylase (209 aa).

Residues Glu-58, Glu-88, His-91, Glu-140, Glu-172, and His-175 each coordinate Fe cation.

Belongs to the COQ7 family. It depends on Fe cation as a cofactor.

The protein resides in the cell membrane. It carries out the reaction a 5-methoxy-2-methyl-3-(all-trans-polyprenyl)benzene-1,4-diol + AH2 + O2 = a 3-demethylubiquinol + A + H2O. The protein operates within cofactor biosynthesis; ubiquinone biosynthesis. Functionally, catalyzes the hydroxylation of 2-nonaprenyl-3-methyl-6-methoxy-1,4-benzoquinol during ubiquinone biosynthesis. The chain is 3-demethoxyubiquinol 3-hydroxylase from Polaromonas naphthalenivorans (strain CJ2).